Reading from the N-terminus, the 321-residue chain is Geranylgeranyl transferase type-2 subunit beta 1 (321 aa).

N-acetylserine is present on Ser2. PFTB repeat units follow at residues 14–55, 62–103, 110–151, 158–199, 206–247, and 254–296; these read ADKH…DLLD, EEEV…ALFD, IGKV…SILK, VEKA…AITG, KDSL…IMID, and KAKL…SLLE. Residues 184-186 and 226-229 contribute to the geranylgeranyl diphosphate site; these read HAG and RPEK. 2 residues coordinate Zn(2+): Asp232 and Cys234. 235–238 provides a ligand contact to geranylgeranyl diphosphate; it reads YSWW. Residue His284 participates in Zn(2+) binding.

Belongs to the protein prenyltransferase subunit beta family. In terms of assembly, heterotrimer composed of the alpha subunit RGTA, the beta subunit RGTB and REP; within this trimer, RGTA and RGTB form the catalytic component, while REP mediates peptide substrate binding. Zn(2+) is required as a cofactor. The cofactor is Mg(2+).

The enzyme catalyses geranylgeranyl diphosphate + L-cysteinyl-[protein] = S-geranylgeranyl-L-cysteinyl-[protein] + diphosphate. Its activity is regulated as follows. The enzymatic reaction requires the aid of the Rab escort protein REP. Functionally, catalyzes the transfer of a geranylgeranyl moiety from geranylgeranyl diphosphate to both cysteines of Rab proteins with the C-terminal sequence -CCXX, CXXX, -XCCX and -XCXC, such as RABA1A, RABA2A, RABF2A and RABG2. Involved in the geranylgeranylation of RABA2A. In vitro, can prenylate PGGTI targets with the C-terminal sequence Cys-aliphatic-aliphatic-X (CaaX) with leucine in the terminal position. Substrates with the C-terminal sequence -CSIL such as ARAC11/ROP1 or GG2/AGG2 are prenylated independently of REP and when the beta subunit is associated with the alpha subunit RGTA1. Required for male fertility and root tip growth. The protein is Geranylgeranyl transferase type-2 subunit beta 1 of Arabidopsis thaliana (Mouse-ear cress).